The chain runs to 86 residues: Co-chaperonin GroES (86 aa).

It belongs to the GroES chaperonin family. As to quaternary structure, heptamer of 7 subunits arranged in a ring. Interacts with the chaperonin GroEL.

It is found in the cytoplasm. Together with the chaperonin GroEL, plays an essential role in assisting protein folding. The GroEL-GroES system forms a nano-cage that allows encapsulation of the non-native substrate proteins and provides a physical environment optimized to promote and accelerate protein folding. GroES binds to the apical surface of the GroEL ring, thereby capping the opening of the GroEL channel. The chain is Co-chaperonin GroES from Campylobacter jejuni subsp. jejuni serotype O:6 (strain 81116 / NCTC 11828).